The following is an 865-amino-acid chain: Alanine--tRNA ligase (865 aa).

4 residues coordinate Zn(2+): His-554, His-558, Cys-656, and His-660.

This sequence belongs to the class-II aminoacyl-tRNA synthetase family. The cofactor is Zn(2+).

The protein localises to the cytoplasm. It catalyses the reaction tRNA(Ala) + L-alanine + ATP = L-alanyl-tRNA(Ala) + AMP + diphosphate. Catalyzes the attachment of alanine to tRNA(Ala) in a two-step reaction: alanine is first activated by ATP to form Ala-AMP and then transferred to the acceptor end of tRNA(Ala). Also edits incorrectly charged Ser-tRNA(Ala) and Gly-tRNA(Ala) via its editing domain. The chain is Alanine--tRNA ligase from Francisella philomiragia subsp. philomiragia (strain ATCC 25017 / CCUG 19701 / FSC 153 / O#319-036).